The following is a 534-amino-acid chain: CTP synthase (534 aa).

An amidoligase domain region spans residues 1 to 267 (MTKYIFVTGG…GDLIIERLAL (267 aa)). Serine 13 is a binding site for CTP. Serine 13 lines the UTP pocket. ATP is bound at residue 14–19 (SVGKGI). Tyrosine 54 provides a ligand contact to L-glutamine. An ATP-binding site is contributed by aspartate 71. Mg(2+)-binding residues include aspartate 71 and glutamate 141. CTP-binding positions include 148–150 (DIE), 188–193 (KTKPTQ), and lysine 224. UTP contacts are provided by residues 188–193 (KTKPTQ) and lysine 224. Residues 292–534 (TVAIVGKYVE…VQAALEQIAE (243 aa)) form the Glutamine amidotransferase type-1 domain. Glycine 354 provides a ligand contact to L-glutamine. Cysteine 381 serves as the catalytic Nucleophile; for glutamine hydrolysis. Residues 382 to 385 (LGMQ), glutamate 405, and arginine 462 each bind L-glutamine. Active-site residues include histidine 507 and glutamate 509.

It belongs to the CTP synthase family. In terms of assembly, homotetramer.

It catalyses the reaction UTP + L-glutamine + ATP + H2O = CTP + L-glutamate + ADP + phosphate + 2 H(+). The enzyme catalyses L-glutamine + H2O = L-glutamate + NH4(+). It carries out the reaction UTP + NH4(+) + ATP = CTP + ADP + phosphate + 2 H(+). The protein operates within pyrimidine metabolism; CTP biosynthesis via de novo pathway; CTP from UDP: step 2/2. With respect to regulation, allosterically activated by GTP, when glutamine is the substrate; GTP has no effect on the reaction when ammonia is the substrate. The allosteric effector GTP functions by stabilizing the protein conformation that binds the tetrahedral intermediate(s) formed during glutamine hydrolysis. Inhibited by the product CTP, via allosteric rather than competitive inhibition. Catalyzes the ATP-dependent amination of UTP to CTP with either L-glutamine or ammonia as the source of nitrogen. Regulates intracellular CTP levels through interactions with the four ribonucleotide triphosphates. The chain is CTP synthase from Herpetosiphon aurantiacus (strain ATCC 23779 / DSM 785 / 114-95).